We begin with the raw amino-acid sequence, 448 residues long: Arginine synthetase ArcE (448 aa).

In terms of assembly, probably forms homotetramers and higher assemblies of tetramers. It depends on Mg(2+) as a cofactor.

The enzyme catalyses L-arginine + ADP + phosphate + H(+) = L-citrulline + NH4(+) + ATP. It functions in the pathway amino-acid biosynthesis; L-proline biosynthesis. The protein operates within amino-acid degradation; L-arginine degradation. It participates in amino-acid biosynthesis; L-arginine biosynthesis. In terms of biological role, arginine deiminase involved in an arginine synthetase pathway, which provides citrulline and ornithine, the precursors for proline biosynthesis. Catalyzes the conversion of L-arginine to citrulline while conserving the energy of arginine deimination to generate ATP from ADP and free phosphate. Is specific toward L-arginine and cannot use D-arginine, agmatine, guanidine, L-alanine-L-arginine dipeptide and L-arginine-L-alanine dipeptide. Can also use CDP, GDP or UDP, with lower activity (38%, 8.4% and 13.3%, respectively). The enzyme can also catalyze the reverse reaction: the ATP-dependent generation of arginine from citrulline in a single reaction by using free ammonia, without the requirement of aspartic acid. In vivo, most likely functions in the arginine catabolism to produce citrulline for proline biosynthesis while also generating ATP, but it can also contribute to arginine biosynthesis when the necessary precursors such as citrulline are abundant. The protein is Arginine synthetase ArcE of Thermococcus kodakarensis (strain ATCC BAA-918 / JCM 12380 / KOD1) (Pyrococcus kodakaraensis (strain KOD1)).